Consider the following 238-residue polypeptide: Transcription factor MYB27 (238 aa).

HTH myb-type domains lie at 6–58 (EETL…MNYL) and 59–113 (NPTL…RKKQ). Residues 31-38 (ERRWDSLA) carry the Nuclear localization signal motif. 2 consecutive DNA-binding regions (H-T-H motif) follow at residues 34-58 (WDSL…MNYL) and 86-109 (WSKI…RTHY).

The protein resides in the nucleus. This is Transcription factor MYB27 from Arabidopsis thaliana (Mouse-ear cress).